We begin with the raw amino-acid sequence, 663 residues long: Transketolase 2 (663 aa).

Residue His-25 coordinates substrate. Residues His-65 and 113–115 (GPL) each bind thiamine diphosphate. Residue Asp-154 coordinates Mg(2+). Residues Gly-155 and Asn-184 each coordinate thiamine diphosphate. Mg(2+) is bound by residues Asn-184 and Ile-186. Residues His-259, Arg-356, and Ser-383 each contribute to the substrate site. A thiamine diphosphate-binding site is contributed by His-259. Catalysis depends on Glu-410, which acts as the Proton donor. Phe-436 is a thiamine diphosphate binding site. 3 residues coordinate substrate: His-460, Asp-468, and Arg-519.

Belongs to the transketolase family. Homodimer. Mg(2+) serves as cofactor. Ca(2+) is required as a cofactor. It depends on Mn(2+) as a cofactor. The cofactor is Co(2+). Requires thiamine diphosphate as cofactor.

It catalyses the reaction D-sedoheptulose 7-phosphate + D-glyceraldehyde 3-phosphate = aldehydo-D-ribose 5-phosphate + D-xylulose 5-phosphate. Functionally, catalyzes the transfer of a two-carbon ketol group from a ketose donor to an aldose acceptor, via a covalent intermediate with the cofactor thiamine pyrophosphate. The polypeptide is Transketolase 2 (tkt2) (Aliivibrio fischeri (strain ATCC 700601 / ES114) (Vibrio fischeri)).